Reading from the N-terminus, the 318-residue chain is Porphobilinogen deaminase (318 aa).

The residue at position 241 (C241) is an S-(dipyrrolylmethanemethyl)cysteine.

This sequence belongs to the HMBS family. Monomer. The cofactor is dipyrromethane.

The catalysed reaction is 4 porphobilinogen + H2O = hydroxymethylbilane + 4 NH4(+). It functions in the pathway porphyrin-containing compound metabolism; protoporphyrin-IX biosynthesis; coproporphyrinogen-III from 5-aminolevulinate: step 2/4. Functionally, tetrapolymerization of the monopyrrole PBG into the hydroxymethylbilane pre-uroporphyrinogen in several discrete steps. This chain is Porphobilinogen deaminase, found in Geobacter sp. (strain M21).